A 315-amino-acid chain; its full sequence is Acetyl-coenzyme A carboxylase carboxyl transferase subunit alpha (315 aa).

Residues 38 to 292 (RLQKKSNELT…KLRLKEDLAE (255 aa)) form the CoA carboxyltransferase C-terminal domain.

The protein belongs to the AccA family. As to quaternary structure, acetyl-CoA carboxylase is a heterohexamer composed of biotin carboxyl carrier protein (AccB), biotin carboxylase (AccC) and two subunits each of ACCase subunit alpha (AccA) and ACCase subunit beta (AccD).

The protein resides in the cytoplasm. The catalysed reaction is N(6)-carboxybiotinyl-L-lysyl-[protein] + acetyl-CoA = N(6)-biotinyl-L-lysyl-[protein] + malonyl-CoA. It participates in lipid metabolism; malonyl-CoA biosynthesis; malonyl-CoA from acetyl-CoA: step 1/1. In terms of biological role, component of the acetyl coenzyme A carboxylase (ACC) complex. First, biotin carboxylase catalyzes the carboxylation of biotin on its carrier protein (BCCP) and then the CO(2) group is transferred by the carboxyltransferase to acetyl-CoA to form malonyl-CoA. This chain is Acetyl-coenzyme A carboxylase carboxyl transferase subunit alpha, found in Haemophilus influenzae (strain 86-028NP).